Here is a 260-residue protein sequence, read N- to C-terminus: Dehydrogenase/reductase SDR family member 4 (260 aa).

Position 18–42 (Ile-18–Val-42) interacts with NADP(+). Lys-74 carries the N6-acetyllysine; alternate modification. Lys-74 bears the N6-succinyllysine; alternate mark. Ser-151 provides a ligand contact to substrate. Catalysis depends on Tyr-164, which acts as the Proton acceptor. Residue Lys-168 participates in NADP(+) binding. Lys-198 is subject to N6-acetyllysine; alternate. The residue at position 198 (Lys-198) is an N6-succinyllysine; alternate. The residue at position 202 (Ser-202) is a Phosphoserine. N6-succinyllysine is present on Lys-209. A Peroxisomal targeting signal motif is present at residues Ser-258–Leu-260.

Belongs to the short-chain dehydrogenases/reductases (SDR) family. Homotetramer. In terms of tissue distribution, detected in liver and kidney. Detected at lower levels in heart, lung, spleen, small intestine, testis, brain and stomach.

The protein localises to the peroxisome. The catalysed reaction is a secondary alcohol + NADP(+) = a ketone + NADPH + H(+). It catalyses the reaction 3alpha-hydroxy-5beta-pregnan-20-one + NADP(+) = 5beta-pregnan-3,20-dione + NADPH + H(+). The enzyme catalyses 5beta-dihydrotestosterone + NADPH + H(+) = 5beta-androstane-3alpha,17beta-diol + NADP(+). It carries out the reaction all-trans-retinol + NADP(+) = all-trans-retinal + NADPH + H(+). The catalysed reaction is isatin + NADPH + H(+) = 3-hydroxyindolin-2-one + NADP(+). Its activity is regulated as follows. Inhibited by flavonoids (kaempferol, quercetin, quercitrin, genistein), myristic acid, pyrazole, barbital, phenobarbital and CuSO4. Functionally, NADPH-dependent oxidoreductase which catalyzes the reduction of a variety of compounds bearing carbonyl groups including ketosteroids, alpha-dicarbonyl compounds, aldehydes, aromatic ketones and quinones. Reduces all-trans-retinal and 9-cis retinal. Reduces 3-ketosteroids and benzil into 3alpha-hydroxysteroids and S-benzoin, respectively, in contrast to the stereoselectivity of primates DHRS4s which produce 3beta-hydroxysteroids and R-benzoin. In the reverse reaction, catalyze the NADP-dependent oxidation of 3alpha-hydroxysteroids and alcohol, but with much lower efficiency. Involved in the metabolism of 3alpha-hydroxysteroids, retinoid, isatin and xenobiotic carbonyl compounds. The protein is Dehydrogenase/reductase SDR family member 4 (DHRS4) of Oryctolagus cuniculus (Rabbit).